The chain runs to 309 residues: Malate dehydrogenase (309 aa).

NAD(+) contacts are provided by residues 10–15 and D34; that span reads GAGNVG. Substrate-binding residues include R83 and R89. NAD(+)-binding positions include N96 and 119–121; that span reads VSN. 2 residues coordinate substrate: N121 and R152. Residue H176 is the Proton acceptor of the active site.

This sequence belongs to the LDH/MDH superfamily. MDH type 3 family.

It catalyses the reaction (S)-malate + NAD(+) = oxaloacetate + NADH + H(+). Functionally, catalyzes the reversible oxidation of malate to oxaloacetate. The protein is Malate dehydrogenase of Heliobacterium modesticaldum (strain ATCC 51547 / Ice1).